Consider the following 462-residue polypeptide: Metal cation symporter ZIP8 (462 aa).

The N-terminal stretch at 1–19 (MAPGRAVAGLLLLAATGLG) is a signal peptide. The Extracellular segment spans residues 20 to 132 (RPSEGPELAF…PSFSEVWGYG (113 aa)). N-linked (GlcNAc...) asparagine glycans are attached at residues Asn-40, Asn-88, and Asn-96. The helical transmembrane segment at 133–153 (FLSVTIINLASLLGLILTPLI) threads the bilayer. Topologically, residues 154-160 (KKSYFPK) are cytoplasmic. The chain crosses the membrane as a helical span at residues 161 to 181 (ILTYFVGLAIGTLFSNAIFQL). The Extracellular portion of the chain corresponds to 182 to 191 (IPEAFGFNPK). The helical transmembrane segment at 192–212 (IDNYVEKAVAVFGGFYMLFFV) threads the bilayer. At 213–367 (ERTLKMLLKT…LNAGMSTRQA (155 aa)) the chain is on the cytoplasmic side. The XEXPHE-motif motif lies at 345–350 (EEFPHE). A helical transmembrane segment spans residues 368–388 (LLFNFLSACSCYVGLAFGILV). The Extracellular segment spans residues 389 to 390 (GN). A helical membrane pass occupies residues 391–411 (NFAPNIIFALAGGMFLYISLA). Residues 412 to 431 (DMFPEMNDMLREKVTGRQTD) lie on the Cytoplasmic side of the membrane. Residues 432–452 (FTFFMIQNAGMLTGFTAILLI) form a helical membrane-spanning segment. Residues 453–462 (TLYAGDIELQ) are Extracellular-facing.

It belongs to the ZIP transporter (TC 2.A.5) family. Homodimer. In terms of processing, N-glycosylated. N-glycosylation is not required for proper iron and zinc transport.

It localises to the cell membrane. The protein localises to the lysosome membrane. The protein resides in the apical cell membrane. It is found in the basolateral cell membrane. It catalyses the reaction Zn(2+)(out) + 2 hydrogencarbonate(out) = Zn(2+)(in) + 2 hydrogencarbonate(in). The enzyme catalyses selenite(out) + Zn(2+)(out) + hydrogencarbonate(out) = selenite(in) + Zn(2+)(in) + hydrogencarbonate(in). It carries out the reaction Mn(2+)(out) + 2 hydrogencarbonate(out) = Mn(2+)(in) + 2 hydrogencarbonate(in). The catalysed reaction is Fe(2+)(out) + 2 hydrogencarbonate(out) = Fe(2+)(in) + 2 hydrogencarbonate(in). It catalyses the reaction Cd(2+)(out) + 2 hydrogencarbonate(out) = Cd(2+)(in) + 2 hydrogencarbonate(in). The enzyme catalyses Co(2+)(out) + 2 hydrogencarbonate(out) = Co(2+)(in) + 2 hydrogencarbonate(in). In terms of biological role, electroneutral divalent metal cation:bicarbonate symporter of the plasma membrane mediating the cellular uptake of zinc and manganese, two divalent metal cations important for development, tissue homeostasis and immunity. Transports an electroneutral complex composed of a divalent metal cation and two bicarbonate anions or alternatively a bicarbonate and a selenite anion. Thereby, it also contributes to the cellular uptake of selenium, an essential trace metal and micronutrient. Also imports cadmium a non-essential metal which is cytotoxic and carcinogenic. May also transport iron and cobalt through membranes. Through zinc import, indirectly regulates the metal-dependent transcription factor MTF1 and the expression of some metalloproteases involved in cartilage catabolism and also probably heart development. Also indirectly regulates the expression of proteins involved in cell morphology and cytoskeleton organization. Indirectly controls innate immune function and inflammatory response by regulating zinc cellular uptake which in turn modulates the expression of genes specific of these processes. Protects, for instance, cells from injury and death at the onset of inflammation. By regulating zinc influx into monocytes also directly modulates their adhesion to endothelial cells and arteries. Reclaims manganese from the bile at the apical membrane of hepatocytes, thereby regulating the activity of the manganese-dependent enzymes through the systemic levels of the nutrient. Also participates in manganese reabsorption in the proximal tubule of the kidney. By mediating the extracellular uptake of manganese by cells of the blood-brain barrier, may also play a role in the transport of the micronutrient to the brain. With manganese cellular uptake also participates in mitochondrial proper function. Finally, also probably functions intracellularly, translocating zinc from lysosome to cytosol to indirectly enhance the expression of specific genes during TCR-mediated T cell activation. This Rattus norvegicus (Rat) protein is Metal cation symporter ZIP8.